The following is a 188-amino-acid chain: MLVSNVYAQTSEALRERVENALEHADRVFPPFDFSHFCSHFFWLVISFGFFYFFIARVIVPRIGCTIEIRRDRIASDLDRAMRLKQEADTVVEIYERKLAEARLQAYAIAQKTSNEIKEKTKLERKEIETSLDKKLADAEGQIAKIRNKAVQNIGSIAEEVVPEIVKKLIGVEVSKESVSLAVKAADN.

The helical transmembrane segment at 41-61 threads the bilayer; sequence FFWLVISFGFFYFFIARVIVP.

Belongs to the ATPase B chain family. F-type ATPases have 2 components, F(1) - the catalytic core - and F(0) - the membrane proton channel. F(1) has five subunits: alpha(3), beta(3), gamma(1), delta(1), epsilon(1). F(0) has three main subunits: a(1), b(2) and c(10-14). The alpha and beta chains form an alternating ring which encloses part of the gamma chain. F(1) is attached to F(0) by a central stalk formed by the gamma and epsilon chains, while a peripheral stalk is formed by the delta and b chains.

The protein resides in the cell inner membrane. Functionally, f(1)F(0) ATP synthase produces ATP from ADP in the presence of a proton or sodium gradient. F-type ATPases consist of two structural domains, F(1) containing the extramembraneous catalytic core and F(0) containing the membrane proton channel, linked together by a central stalk and a peripheral stalk. During catalysis, ATP synthesis in the catalytic domain of F(1) is coupled via a rotary mechanism of the central stalk subunits to proton translocation. In terms of biological role, component of the F(0) channel, it forms part of the peripheral stalk, linking F(1) to F(0). The b'-subunit is a diverged and duplicated form of b found in plants and photosynthetic bacteria. The sequence is that of ATP synthase subunit b 2 (atpF2) from Bartonella bacilliformis (strain ATCC 35685 / KC583 / Herrer 020/F12,63).